A 374-amino-acid polypeptide reads, in one-letter code: Eukaryotic translation initiation factor 3 subunit M (374 aa).

The region spanning 180 to 339 (TAAKVMVELL…RKVVVSHSTH (160 aa)) is the PCI domain.

It belongs to the eIF-3 subunit M family. Component of the eukaryotic translation initiation factor 3 (eIF-3) complex, which is composed of 13 subunits: EIF3A, EIF3B, EIF3C, EIF3D, EIF3E, EIF3F, EIF3G, EIF3H, EIF3I, EIF3J, EIF3K, EIF3L and EIF3M.

The protein resides in the cytoplasm. Functionally, component of the eukaryotic translation initiation factor 3 (eIF-3) complex, which is involved in protein synthesis of a specialized repertoire of mRNAs and, together with other initiation factors, stimulates binding of mRNA and methionyl-tRNAi to the 40S ribosome. The eIF-3 complex specifically targets and initiates translation of a subset of mRNAs involved in cell proliferation. The polypeptide is Eukaryotic translation initiation factor 3 subunit M (Gallus gallus (Chicken)).